The following is a 310-amino-acid chain: Proline iminopeptidase (310 aa).

One can recognise an AB hydrolase-1 domain in the interval 41 to 288 (LVTLHGGPGG…NSSHMAMWEE (248 aa)). The Nucleophile role is filled by Ser116. The active site involves Asp255. His282 (proton donor) is an active-site residue.

Belongs to the peptidase S33 family. In terms of assembly, part of the tricorn proteolytic complex.

The enzyme catalyses Release of N-terminal proline from a peptide.. In terms of biological role, cleaves H-Pro-AMC as well as a wide spectrum of amino acid substrates and several peptide substrates without a proline at the N-terminus. In conjunction with the three factors F1, F2 and F3, Tricorn degrades oligopeptides in a sequential manner, yielding free amino acids. This is Proline iminopeptidase (pip) from Saccharolobus solfataricus (strain ATCC 35092 / DSM 1617 / JCM 11322 / P2) (Sulfolobus solfataricus).